We begin with the raw amino-acid sequence, 209 residues long: Ubiquitin-conjugating enzyme E2 S (209 aa).

A UBC core domain is found at 14-160; that stretch reads QTIRQVMREL…ARMMTEIHAQ (147 aa). Residue Cys98 is the Glycyl thioester intermediate of the active site. The tract at residues 164-209 is disordered; the sequence is CAAGAAGDSKDDDGPSTKKHAGLDKKLQDKKKEKLLKEKKRMLKRL. Positions 171–199 are enriched in basic and acidic residues; it reads DSKDDDGPSTKKHAGLDKKLQDKKKEKLL. Positions 200–209 are enriched in basic residues; that stretch reads KEKKRMLKRL.

This sequence belongs to the ubiquitin-conjugating enzyme family.

The enzyme catalyses S-ubiquitinyl-[E1 ubiquitin-activating enzyme]-L-cysteine + [E2 ubiquitin-conjugating enzyme]-L-cysteine = [E1 ubiquitin-activating enzyme]-L-cysteine + S-ubiquitinyl-[E2 ubiquitin-conjugating enzyme]-L-cysteine.. Its pathway is protein modification; protein ubiquitination. Its function is as follows. Catalyzes the covalent attachment of ubiquitin to other proteins. Acts as an essential factor of the anaphase promoting complex/cyclosome (APC/C), a cell cycle-regulated ubiquitin ligase that controls progression through mitosis. Acts by specifically elongating polyubiquitin chains initiated by the E2 enzyme vih/UbcH10 on APC/C substrates, enhancing the degradation of APC/C substrates by the proteasome and promoting mitotic exit. In Drosophila ananassae (Fruit fly), this protein is Ubiquitin-conjugating enzyme E2 S.